Consider the following 431-residue polypeptide: uncharacterized protein (431 aa).

4Fe-4S ferredoxin-type domains are found at residues 336-367 (VRPV…NGLD) and 362-391 (IDNG…MDTG).

This is an uncharacterized protein from Methanothermobacter thermautotrophicus (strain ATCC 29096 / DSM 1053 / JCM 10044 / NBRC 100330 / Delta H) (Methanobacterium thermoautotrophicum).